A 425-amino-acid polypeptide reads, in one-letter code: GTPase Obg (425 aa).

In terms of domain architecture, Obg spans 1 to 158 (MFVDQVKVYV…RYIVMELKLI (158 aa)). A disordered region spans residues 118-144 (KGGRGGRGNNRFANSSNPAPHISENGE). The 169-residue stretch at 159–327 (ADVGLVGYPS…LMYAIGDTLA (169 aa)) folds into the OBG-type G domain. Residues 165–172 (GYPSVGKS), 190–194 (FTTLT), 211–214 (DLPG), 281–284 (NKME), and 308–310 (SAA) each bind ATP. Positions 172 and 192 each coordinate Mg(2+). Positions 348 to 425 (RAEKEPDAFE…IGKLEFDFVE (78 aa)) constitute an OCT domain.

Belongs to the TRAFAC class OBG-HflX-like GTPase superfamily. OBG GTPase family. In terms of assembly, monomer. Requires Mg(2+) as cofactor.

The protein resides in the cytoplasm. In terms of biological role, an essential GTPase which binds GTP, GDP and possibly (p)ppGpp with moderate affinity, with high nucleotide exchange rates and a fairly low GTP hydrolysis rate. Plays a role in control of the cell cycle, stress response, ribosome biogenesis and in those bacteria that undergo differentiation, in morphogenesis control. The sequence is that of GTPase Obg from Brevibacillus brevis (strain 47 / JCM 6285 / NBRC 100599).